The following is a 346-amino-acid chain: uncharacterized protein (346 aa).

The tract at residues 321 to 346 (TPWGTHSVAGVGPPPYARSGPASATT) is disordered.

This is an uncharacterized protein from Mycobacterium tuberculosis (strain CDC 1551 / Oshkosh).